We begin with the raw amino-acid sequence, 143 residues long: Turripeptide VIII-01 (143 aa).

The first 23 residues, 1 to 23 (MALSLDILMSVTMVTAVLTTVNA), serve as a signal peptide directing secretion. Residues 24–32 (EYKDSRLDS) constitute a propeptide that is removed on maturation.

Post-translationally, contains 4 disulfide bonds. Expressed by the venom duct.

The protein localises to the secreted. The polypeptide is Turripeptide VIII-01 (Gemmula speciosa (Splendid gem-turris)).